Here is a 566-residue protein sequence, read N- to C-terminus: Good for full DBP5 activity protein 2 (566 aa).

Positions 1 to 16 are enriched in polar residues; sequence MQVQKMVRDNSNNGSD. The tract at residues 1 to 41 is disordered; the sequence is MQVQKMVRDNSNNGSDKSVHWERRNNNGAGPRYRSRSGNTG.

Its function is as follows. High-copy suppressor of DBP5 mutation. The chain is Good for full DBP5 activity protein 2 (GFD2) from Saccharomyces cerevisiae (strain ATCC 204508 / S288c) (Baker's yeast).